The chain runs to 1088 residues: Insulin receptor substrate 1-B (1088 aa).

In terms of domain architecture, PH spans 15 to 117; sequence DVRKVGYLRK…WYQALVDLHN (103 aa). At Y48 the chain carries Phosphotyrosine. An IRS-type PTB domain is found at 155-259; the sequence is FKEVWQVIMK…EAMKALSDEF (105 aa). Residues 259 to 428 are disordered; it reads FRPRSKSQSS…GGFISSDEYG (170 aa). 4 stretches are compositionally biased toward low complexity: residues 264-278, 302-312, 379-400, and 408-420; these read KSQS…ISVP, SATATSPAGGA, SPSA…GSTS, and SSAS…SDGG. At S307 the chain carries Phosphoserine. The residue at position 460 (Y460) is a Phosphotyrosine; by INSR. The short motif at 460-463 is the YXXM motif 1 element; that stretch reads YICM. Composition is skewed to polar residues over residues 466–479 and 499–516; these read SSSH…QRYQ and SSGT…PSQS. Disordered regions lie at residues 466-485 and 496-516; these read SSSH…RGEE and RTHS…PSQS. Short sequence motifs (YXXM motif) lie at residues 521 to 524, 567 to 570, 584 to 587, 612 to 615, and 654 to 657; these read YTEM, YMPM, YMMM, and YINM. Residues Y567 and Y584 each carry the phosphotyrosine; by INSR modification. Y612 carries the post-translational modification Phosphotyrosine. The segment at 704 to 785 is disordered; sequence NLRISANSGH…PPEPKSPGEY (82 aa). Residues 707–718 are compositionally biased toward polar residues; sequence ISANSGHNLYTE. Residues 719-729 show a composition bias toward low complexity; it reads DSSSSSTSSDS. Residues Y785 and Y823 each carry the phosphotyrosine; by INSR modification. The interval 785 to 787 is GRB2-binding; sequence YVN. The short motif at 823-826 is the YXXM motif 7 element; it reads YMNM. Polar residues predominate over residues 840-863; the sequence is TSSYEPPNKPVNSVCPTETCSSSR. The segment at 840–868 is disordered; it reads TSSYEPPNKPVNSVCPTETCSSSRPPIRG. A Phosphotyrosine; by INSR modification is found at Y875. 2 consecutive short sequence motifs (YXXM motif) follow at residues 875-878 and 909-912; these read YMSM and YAEM. The disordered stretch occupies residues 935–1006; the sequence is ASRSSLLGQG…SGEDVKRHSS (72 aa). Composition is skewed to polar residues over residues 946–961 and 980–995; these read GPSA…NRNP and ETFS…TTGP. Residues Y1037 and Y1069 each carry the phosphotyrosine; by INSR modification.

In terms of assembly, interacts with the NPXY motif of tyrosine-phosphorylated igf1r and insr via the PTB domain. Binds to phosphatidylinositol 3-kinase p85 subunit at a low level in vitro prior to phosphorylation. Binding is greatly enhanced following tyrosine phosphorylation by insr and probably occurs via the phosphorylated YXXM motifs. In terms of processing, phosphorylation of Tyr-785 is required for grb2-binding.

Functionally, may mediate the control of various cellular processes by insulin. When phosphorylated by the insulin receptor binds specifically to various cellular proteins containing SH2 domains such as phosphatidylinositol 3-kinase p85 subunit or grb2. Activates phosphatidylinositol 3-kinase when bound to the regulatory p85 subunit. The sequence is that of Insulin receptor substrate 1-B (irs1-b) from Xenopus laevis (African clawed frog).